A 645-amino-acid polypeptide reads, in one-letter code: Serine/threonine-protein kinase BUR1 (645 aa).

The region spanning 55-379 is the Protein kinase domain; the sequence is YREEEKLGQG…AMKAKKHPFF (325 aa). Residues 61–69 and Lys84 contribute to the ATP site; that span reads LGQGTFGEV. Residue Asp208 is the Proton acceptor of the active site. 3 disordered regions span residues 407 to 428, 442 to 513, and 533 to 645; these read EMNE…STDN, ASIP…KYPA, and RYRN…ADYY. 2 stretches are compositionally biased toward polar residues: residues 409–428 and 457–474; these read NESM…STDN and IPAQ…TQNI. Positions 477 to 486 are enriched in pro residues; that stretch reads EPIPTAPLPK. Residues 578–598 show a composition bias toward polar residues; it reads NRYQNQDYNTSRNTGYNQYSQ.

Belongs to the protein kinase superfamily. CMGC Ser/Thr protein kinase family. CDC2/CDKX subfamily.

It localises to the nucleus. It carries out the reaction L-seryl-[protein] + ATP = O-phospho-L-seryl-[protein] + ADP + H(+). It catalyses the reaction L-threonyl-[protein] + ATP = O-phospho-L-threonyl-[protein] + ADP + H(+). The enzyme catalyses [DNA-directed RNA polymerase] + ATP = phospho-[DNA-directed RNA polymerase] + ADP + H(+). In terms of biological role, serine/threonine-protein kinase involved in transcription regulation. Phosphorylates the UBC2/RAD6 ubiquitin-conjugating enzyme (E2), leading to monoubiquitination of histone H2B and the silencing of telomeric-associated genes. Also required for histone H3 methylation. Necessary for the recovery from pheromone-induced growth arrest in the cell cycle G1 phase. This chain is Serine/threonine-protein kinase BUR1 (BUR1), found in Kluyveromyces lactis (strain ATCC 8585 / CBS 2359 / DSM 70799 / NBRC 1267 / NRRL Y-1140 / WM37) (Yeast).